Consider the following 348-residue polypeptide: Flagellar P-ring protein (348 aa).

A signal peptide spans 1 to 24 (MRRKNNNKIWIWVATLILSISALY).

Belongs to the FlgI family. The basal body constitutes a major portion of the flagellar organelle and consists of four rings (L,P,S, and M) mounted on a central rod.

The protein resides in the periplasm. The protein localises to the bacterial flagellum basal body. In terms of biological role, assembles around the rod to form the L-ring and probably protects the motor/basal body from shearing forces during rotation. The polypeptide is Flagellar P-ring protein (Helicobacter hepaticus (strain ATCC 51449 / 3B1)).